The chain runs to 898 residues: Serine/threonine-protein kinase TAO3 (898 aa).

Residues 24–277 (FIGLHEIGHG…SAELLRHDFV (254 aa)) enclose the Protein kinase domain. ATP-binding positions include 30-38 (IGHGSFGAV) and K53. The active-site Proton acceptor is D147. Disordered stretches follow at residues 316-362 (TRNG…SQSS) and 405-425 (DEAG…VQSQ). S324 carries the phosphoserine; by ATM modification. Residues S331, S343, S346, and S349 each carry the phosphoserine modification. Residues 334–351 (GTSLNREMDSLGSNHSIP) are compositionally biased toward polar residues. The segment covering 352-362 (SMSVSTGSQSS) has biased composition (low complexity). The residue at position 357 (T357) is a Phosphothreonine. Residue S359 is modified to Phosphoserine. Residues 405-416 (DEAGHGDPRPEP) show a composition bias toward basic and acidic residues. The residue at position 442 (S442) is a Phosphoserine. Coiled coils occupy residues 452-502 (EQEN…THAN), 548-649 (FLES…HAML), and 754-879 (LKTL…DMES). The interval 565–596 (EEMNEDHSTPKKEKQERISKHKENLQHTQAEE) is disordered. At K830 the chain carries N6-acetyllysine.

It belongs to the protein kinase superfamily. STE Ser/Thr protein kinase family. STE20 subfamily. As to quaternary structure, self-associates. Interacts with ERN1 and TRAF2. Interaction with TRAF2 is facilitated under ER stress conditions, such as treatment with tunicamycin, and may promote TRAF2 phosphorylation. Interacts (via N-terminus) with STK25; the interaction promotes STK25 abundance at the level of protein expression and/or stability. (Microbial infection) Interacts with herpes simplex virus 1 UL37 protein. Autophosphorylated. Phosphorylation at Ser-324 by ATM following DNA damage is required for activation of the p38/MAPK14 stress-activated MAPK cascade. Phosphorylated at Ser-324 and on Tyr residues during T cell activation. Phosphorylated by LRRK2. Ubiquitously expressed at a low level, and highly expressed in peripheral blood leukocytes (PBLs), thymus, spleen, kidney, skeletal muscle, heart and liver.

The protein resides in the cytoplasm. Its subcellular location is the cell membrane. The protein localises to the membrane raft. It localises to the lipid droplet. The catalysed reaction is L-seryl-[protein] + ATP = O-phospho-L-seryl-[protein] + ADP + H(+). It catalyses the reaction L-threonyl-[protein] + ATP = O-phospho-L-threonyl-[protein] + ADP + H(+). Functionally, serine/threonine-protein kinase that acts as a regulator of the p38/MAPK14 stress-activated MAPK cascade and of the MAPK8/JNK cascade. In response to DNA damage, involved in the G2/M transition DNA damage checkpoint by activating the p38/MAPK14 stress-activated MAPK cascade, probably by mediating phosphorylation of upstream MAP2K3 and MAP2K6 kinases. Inhibits basal activity of the MAPK8/JNK cascade and diminishes its activation in response to epidermal growth factor (EGF). Positively regulates canonical T cell receptor (TCR) signaling by preventing early PTPN6/SHP1-mediated inactivation of LCK, ensuring sustained TCR signaling that is required for optimal activation and differentiation of T cells. Phosphorylates PTPN6/SHP1 on 'Thr-394', leading to its polyubiquitination and subsequent proteasomal degradation. Required for cell surface expression of metalloprotease ADAM10 on type 1 transitional B cells which is necessary for their NOTCH-mediated development into marginal zone B cells. Also required for the NOTCH-mediated terminal differentiation of splenic conventional type 2 dendritic cells. Positively regulates osteoblast differentiation by acting as an upstream activator of the JNK pathway. Promotes JNK signaling in hepatocytes and positively regulates hepatocyte lipid storage by inhibiting beta-oxidation and triacylglycerol secretion while enhancing lipid synthesis. Restricts age-associated inflammation by negatively regulating differentiation of macrophages and their production of pro-inflammatory cytokines. Plays a role in negatively regulating the abundance of regulatory T cells in white adipose tissue. The sequence is that of Serine/threonine-protein kinase TAO3 (TAOK3) from Homo sapiens (Human).